The primary structure comprises 142 residues: Neuritin (142 aa).

Positions 1 to 27 (MGLTLSGRYISLFLAVQIAYLLQAVRA) are cleaved as a signal peptide. Residue Ala112 is the site of GPI-anchor amidated alanine attachment. The propeptide at 113–142 (GGNGAIRSSVPFGVTLLITALSALVTWMQF) is removed in mature form.

Belongs to the neuritin family.

The protein resides in the cell membrane. The protein localises to the synapse. Its function is as follows. Modulates postsynaptic dendritic arbor elaboration and synaptic maturation. This chain is Neuritin (nrn1), found in Danio rerio (Zebrafish).